The primary structure comprises 263 residues: Aquaporin-8 (263 aa).

Residues 1–38 (MSGEQTPMCSMDLREIKGKETNMADSYHGMSWYEQYIQ) are Cytoplasmic-facing. The helical transmembrane segment at 39 to 59 (PCVVELLGSALFIFIGCLSVI) threads the bilayer. Position 55 is a cysteine persulfide (C55). C55 carries the cysteine sulfenic acid (-SOH) modification. The Extracellular segment spans residues 60–86 (ENSPNTGLLQPALAHGLALGLIIATLG). The chain crosses the membrane as a helical span at residues 87-107 (NISGGHFNPAVSLAVTLVGGL). The NPA 1 signature appears at 94 to 96 (NPA). Residues 108-109 (KT) are Cytoplasmic-facing. The helical transmembrane segment at 110 to 130 (MLLIPYWVSQLFGGMIGAALA) threads the bilayer. At 131 to 158 (KVVSPEERFWNASGAAFAIVQEQEQVAE) the chain is on the extracellular side. The N-linked (GlcNAc...) asparagine glycan is linked to N141. The chain crosses the membrane as a helical span at residues 159–179 (ALGVEIVMTMLLVLAVCMGAV). At 180-185 (NEKTMG) the chain is on the cytoplasmic side. A helical transmembrane segment spans residues 186-206 (PLAPFSIGFSVIVDILAGGGI). The Extracellular segment spans residues 207–230 (SGACMNPARAFGPAVMAGYWDFHW). The short motif at 212–214 (NPA) is the NPA 2 element. The chain crosses the membrane as a helical span at residues 231–251 (IYWLGPLLAGLFVGLLIRLFI). The Cytoplasmic segment spans residues 252 to 263 (GDEKTRLILKSR).

This sequence belongs to the MIP/aquaporin (TC 1.A.8) family. Post-translationally, N-glycosylated. In terms of processing, sulfenylation at Cys-55(C55-SOH) when hydrogen peroxide flows through the AQP8 channel, making it susceptible to hydrogen sulfide produced by CBS. Persulfidation at Cys-55 is required to gate AQP8 channel; under stress condition, hydrogen peroxide accumulates in the cell leading to CBS activation that produces hydrogen sulfide inducing persulfidation of oxidized Cys-55 (C55-SOH). As to expression, highly expressed in sperm, pancreas and liver. Expressed in hepatocytes, acinal cells of pancreas and salivary gland, and absorptive colonic epithelial cells. Expressed in the myoepithelium of submandibular and parotid glands. Expressed in pancreatic beta-cells. Expressed in testis but not in epididymis. Expressed in small intestine.

The protein localises to the cell membrane. It localises to the mitochondrion inner membrane. The protein resides in the apical cell membrane. It is found in the basolateral cell membrane. Its subcellular location is the smooth endoplasmic reticulum membrane. The catalysed reaction is H2O(in) = H2O(out). It carries out the reaction NH4(+)(in) = NH4(+)(out). It catalyses the reaction H2O2(out) = H2O2(in). The enzyme catalyses formamide(out) = formamide(in). The catalysed reaction is methylamine(out) = methylamine(in). Its activity is regulated as follows. Reversibly gated by a two-step sulfenylation-persulfidation process in cells undergoing diverse stresses. Its function is as follows. Channel that allows the facilitated permeation of water and uncharged molecules, such as hydrogen peroxide and the neutral form of ammonia (NH3), through cellular membranes such as plasma membrane, inner mitochondrial membrane and endoplasmic reticulum membrane of several tissues. The transport of ammonia neutral form induces a parallel transport of proton, at alkaline pH when the concentration of ammonia is high. However, it is unclear whether the transport of proton takes place via the aquaporin or via an endogenous pathway. Also, may transport ammonia analogs such as formamide and methylamine, a transport favourited at basic pH due to the increase of unprotonated (neutral) form, which is expected to favor diffusion. Does not transport urea or glycerol. The water transport mechanism is mercury- and copper-sensitive and passive in response to osmotic driving forces. At the canicular plasma membrane, mediates the osmotic transport of water toward the bile canaliculus and facilitates the cAMP-induced bile canalicular water secretion, a process involved in bile formation. In addition, mediates the hydrogen peroxide release from hepatocyte mitochondria that modulates the SREBF2-mediated cholesterol synthesis and facilitates the mitochondrial ammonia uptake which is metabolized into urea, mainly under glucagon stimulation. In B cells, transports the CYBB-generated hydrogen peroxide from the external leaflet of the plasma membrane to the cytosol to promote B cell activation and differentiation for signal amplification. In the small intestine and colon system, mediates water transport through mitochondria and apical membrane of epithelial cells. May play an important role in the adaptive response of proximal tubule cells to acidosis possibly facilitating mitochondrial ammonia transport. The sequence is that of Aquaporin-8 from Rattus norvegicus (Rat).